Reading from the N-terminus, the 471-residue chain is Phosphatidate cytidylyltransferase 3 (471 aa).

The disordered stretch occupies residues 1–72 (MAMEKDLSPN…HRRRSSENLA (72 aa)). Polar residues predominate over residues 21–35 (SYPTTPTSRMNTNNQ). 8 helical membrane-spanning segments follow: residues 97 to 116 (WIRT…IIYM), 120 to 139 (YIWA…LFFL), 149 to 169 (LPGF…FVYG), 196 to 216 (YQMV…ILTL), 228 to 250 (YAWT…ANIF), 255 to 277 (WFLL…GFYF), 293 to 313 (GFIG…NVLG), and 368 to 388 (FSLG…ASGF).

It belongs to the CDS family. Requires Mg(2+) as cofactor.

It localises to the membrane. It catalyses the reaction a 1,2-diacyl-sn-glycero-3-phosphate + CTP + H(+) = a CDP-1,2-diacyl-sn-glycerol + diphosphate. The protein operates within phospholipid metabolism; CDP-diacylglycerol biosynthesis; CDP-diacylglycerol from sn-glycerol 3-phosphate: step 3/3. May be involved in the synthesis of minor phospholipids and in modulation of IP3-mediated signal transduction. The sequence is that of Phosphatidate cytidylyltransferase 3 from Arabidopsis thaliana (Mouse-ear cress).